A 541-amino-acid polypeptide reads, in one-letter code: MKLLMTGLLASAAVAAAQEQQVLQAEGSAQQQPAPSIFDETLKQFESGLEEGITHFWSEMKTNFKHYLPLISVPKEHTRRADSEWDHVVRGADVESVWVQGANGEKHREIDGKLQSYDLRVKAVDPAELGIDPGVKQYSGYLDDNETDKHLFYWFFESRNDPKNDPVVLWLNGGPGCSSLTGLFLELGPATIDKNLKIVPNPYSWNSNASVIFLDQPVNVGFSYSGSSVSDTVAAGKDIYALLTLFFKQFPEYATQDFHISGESYAGHYIPVFASEILSHKNTNINLKSVLIGNGLTDPLTQYPQYRPMACGDGGYPAVLDQGTCRSMDNSLERCLSLIETCYSSESAWVCVPAAMYCNSAIIGPYQQTGMNPYDVRSKCEDMSSLCYPQLNTITEWLNQKSVMKALGVEVESYESCNGGINRDFLFHGDWMKPYHRLVPSLLEKIPVLIYAGDADFICNWLGNLAWTNALEWPGHKKFADAKMNDLKIVDNKSKGKKIGQVKSSGNFTFMRIFGAGHMVPLNQPEASLEFFNRWLRGEWR.

The first 17 residues, 1 to 17 (MKLLMTGLLASAAVAAA), serve as a signal peptide directing secretion. Residues 18–122 (QEQQVLQAEG…KLQSYDLRVK (105 aa)) constitute a propeptide that is removed on maturation. 5 disulfides stabilise this stretch: Cys-177–Cys-417, Cys-311–Cys-325, Cys-335–Cys-358, Cys-342–Cys-351, and Cys-380–Cys-387. An N-linked (GlcNAc...) asparagine glycan is attached at Asn-208. Residue Ser-264 is part of the active site. Asp-456 is a catalytic residue. Asn-507 is a glycosylation site (N-linked (GlcNAc...) asparagine). His-518 is an active-site residue.

It belongs to the peptidase S10 family.

The protein localises to the vacuole. It catalyses the reaction Release of a C-terminal amino acid with broad specificity.. In terms of biological role, vacuolar carboxypeptidase involved in degradation of small peptides. Digests preferentially peptides containing an aliphatic or hydrophobic residue in P1' position, as well as methionine, leucine or phenylalanine in P1 position of ester substrate. The protein is Carboxypeptidase Y homolog A (CPYA) of Arthroderma otae (strain ATCC MYA-4605 / CBS 113480) (Microsporum canis).